The following is a 148-amino-acid chain: Ribosomal RNA large subunit methyltransferase H (148 aa).

Residues Leu62, Gly94, and 113–118 each bind S-adenosyl-L-methionine; that span reads LSLLTL.

It belongs to the RNA methyltransferase RlmH family. Homodimer.

It is found in the cytoplasm. It carries out the reaction pseudouridine(1915) in 23S rRNA + S-adenosyl-L-methionine = N(3)-methylpseudouridine(1915) in 23S rRNA + S-adenosyl-L-homocysteine + H(+). In terms of biological role, specifically methylates the pseudouridine at position 1915 (m3Psi1915) in 23S rRNA. The chain is Ribosomal RNA large subunit methyltransferase H from Deinococcus geothermalis (strain DSM 11300 / CIP 105573 / AG-3a).